The following is a 677-amino-acid chain: Nuclear fusion protein FUS2 (677 aa).

Position 20 is a phosphothreonine (Thr-20). Residues Ser-67, Ser-72, and Ser-84 each carry the phosphoserine modification. A Phosphothreonine modification is found at Thr-88. Residues Ser-100 and Ser-106 each carry the phosphoserine modification. A DH domain is found at 112–326 (KFYKIVQEFY…KYSLFSNKLE (215 aa)).

It localises to the cell tip. Functionally, promotes cell fusion during zygote formation. This Saccharomyces cerevisiae (strain ATCC 204508 / S288c) (Baker's yeast) protein is Nuclear fusion protein FUS2 (FUS2).